Consider the following 496-residue polypeptide: Ammonium transporter 1 member 2 (496 aa).

Helical transmembrane passes span 39–59 (LLFS…LCAG), 74–94 (VLDA…FAFG), 120–140 (FFLF…GSIA), 148–168 (YLIY…HWIW), 192–212 (FAGS…GALI), 236–256 (LVVL…PGSF), 274–296 (SAVG…TTLF), 307–327 (VIDV…GCSV), 331–351 (WAAI…NALA), 360–380 (LEAA…TALF), and 412–432 (IVVI…LFLV).

The protein belongs to the ammonia transporter channel (TC 1.A.11.2) family. As to expression, expressed in exodermis, sclerenchyma, endodermis and pericycle cells of primary root tips.

The protein resides in the membrane. Its function is as follows. Ammonium transporter probably involved in ammonium uptake from the soil and ammonium uptake and retrieval in the vascular system. This is Ammonium transporter 1 member 2 (AMT1-2) from Oryza sativa subsp. japonica (Rice).